The sequence spans 159 residues: Pathogenesis-related leaf protein 4 (159 aa).

The first 24 residues, 1–24 (MGLFNISLLLTCLMVLAIFHSCEA), serve as a signal peptide directing secretion. A Pyrrolidone carboxylic acid modification is found at Q25. The SCP domain occupies 32 to 147 (LAVHNDARAQ…NGWWFISCNY (116 aa)). 3 cysteine pairs are disulfide-bonded: C68–C136, C109–C115, and C131–C145.

It belongs to the CRISP family.

Its function is as follows. Probably involved in the defense reaction of plants against pathogens. The polypeptide is Pathogenesis-related leaf protein 4 (Solanum lycopersicum (Tomato)).